A 517-amino-acid polypeptide reads, in one-letter code: NEDD8-activating enzyme E1 regulatory subunit (517 aa).

Belongs to the ubiquitin-activating E1 family. ULA1 subfamily. Heterodimer of uba3 and ula1. The complex binds NEDD8/ubl1 and ubc12.

It is found in the cytoplasm. Its subcellular location is the nucleus. It functions in the pathway protein modification; protein neddylation. Regulatory subunit of the dimeric uba3-ula1 E1 enzyme. E1 activates NEDD8/ubl1 by first adenylating its C-terminal glycine residue with ATP, thereafter linking this residue to the side chain of the catalytic cysteine, yielding a NEDD8-UBA3 thioester and free AMP. E1 finally transfers NEDD8 to the catalytic cysteine of ubc12. This Schizosaccharomyces pombe (strain 972 / ATCC 24843) (Fission yeast) protein is NEDD8-activating enzyme E1 regulatory subunit (uba5).